Here is a 293-residue protein sequence, read N- to C-terminus: 4-hydroxy-tetrahydrodipicolinate synthase (293 aa).

Thr-44 serves as a coordination point for pyruvate. Catalysis depends on Tyr-132, which acts as the Proton donor/acceptor. Residue Lys-161 is the Schiff-base intermediate with substrate of the active site. Residue Ile-205 coordinates pyruvate.

It belongs to the DapA family. In terms of assembly, homotetramer; dimer of dimers.

It localises to the cytoplasm. It catalyses the reaction L-aspartate 4-semialdehyde + pyruvate = (2S,4S)-4-hydroxy-2,3,4,5-tetrahydrodipicolinate + H2O + H(+). It participates in amino-acid biosynthesis; L-lysine biosynthesis via DAP pathway; (S)-tetrahydrodipicolinate from L-aspartate: step 3/4. In terms of biological role, catalyzes the condensation of (S)-aspartate-beta-semialdehyde [(S)-ASA] and pyruvate to 4-hydroxy-tetrahydrodipicolinate (HTPA). The chain is 4-hydroxy-tetrahydrodipicolinate synthase from Thermosipho africanus (strain TCF52B).